Here is a 601-residue protein sequence, read N- to C-terminus: ATP-dependent lipid A-core flippase (601 aa).

The next 6 membrane-spanning stretches (helical) occupy residues 35–55 (FAVAMVCMLIAGALTSSLAFL), 77–97 (LAIILIYLVKGGCSYFQAILM), 150–170 (AVTSLMKDSFTLICLVFVIFY), 173–193 (WQLAIIAMIVFPLTIYPIAKF), 263–283 (MEFLGGIGIAAIIFYGGYQVI), and 286–306 (SSTPGTFFSFLTALIMLYEPV). In terms of domain architecture, ABC transmembrane type-1 spans 36–318 (AVAMVCMLIA…LTNVNNTIQQ (283 aa)). Residues 352-585 (IEIRNISFAY…RGEYYKLHQL (234 aa)) enclose the ABC transporter domain. 384-391 (GMSGGGKT) lines the ATP pocket.

Belongs to the ABC transporter superfamily. Lipid exporter (TC 3.A.1.106) family. In terms of assembly, homodimer.

It is found in the cell inner membrane. The enzyme catalyses ATP + H2O + lipid A-core oligosaccharideSide 1 = ADP + phosphate + lipid A-core oligosaccharideSide 2.. In terms of biological role, involved in lipopolysaccharide (LPS) biosynthesis. Translocates lipid A-core from the inner to the outer leaflet of the inner membrane. Transmembrane domains (TMD) form a pore in the inner membrane and the ATP-binding domain (NBD) is responsible for energy generation. The sequence is that of ATP-dependent lipid A-core flippase from Syntrophus aciditrophicus (strain SB).